The chain runs to 158 residues: Phosphopantetheine adenylyltransferase (158 aa).

S8 is a substrate binding site. ATP contacts are provided by residues 8 to 9 and H16; that span reads SF. The substrate site is built by K40, T72, and R86. Residues 87–89, E97, and 122–128 each bind ATP; these read GLR and HSFLSSS.

The protein belongs to the bacterial CoaD family. Homohexamer. It depends on Mg(2+) as a cofactor.

The protein resides in the cytoplasm. The enzyme catalyses (R)-4'-phosphopantetheine + ATP + H(+) = 3'-dephospho-CoA + diphosphate. It functions in the pathway cofactor biosynthesis; coenzyme A biosynthesis; CoA from (R)-pantothenate: step 4/5. Its function is as follows. Reversibly transfers an adenylyl group from ATP to 4'-phosphopantetheine, yielding dephospho-CoA (dPCoA) and pyrophosphate. This Prochlorococcus marinus (strain NATL1A) protein is Phosphopantetheine adenylyltransferase.